The sequence spans 445 residues: Phosphoglucosamine mutase (445 aa).

The active-site Phosphoserine intermediate is the Ser101. Residues Ser101, Asp240, Asp242, and Asp244 each coordinate Mg(2+). Ser101 bears the Phosphoserine mark.

The protein belongs to the phosphohexose mutase family. The cofactor is Mg(2+). Post-translationally, activated by phosphorylation.

The enzyme catalyses alpha-D-glucosamine 1-phosphate = D-glucosamine 6-phosphate. Functionally, catalyzes the conversion of glucosamine-6-phosphate to glucosamine-1-phosphate. The sequence is that of Phosphoglucosamine mutase from Pseudomonas paraeruginosa (strain DSM 24068 / PA7) (Pseudomonas aeruginosa (strain PA7)).